We begin with the raw amino-acid sequence, 492 residues long: Steroid 21-hydroxylase (492 aa).

Arg92 and Lys121 together coordinate heme b. Arg232 lines the 17alpha-hydroxyprogesterone pocket. Arg232 contributes to the progesterone binding site. Residues His364, Arg425, and Cys427 each coordinate heme b.

It belongs to the cytochrome P450 family. The cofactor is heme b.

The protein localises to the endoplasmic reticulum membrane. Its subcellular location is the microsome membrane. The catalysed reaction is progesterone + reduced [NADPH--hemoprotein reductase] + O2 = 21-hydroxyprogesterone + oxidized [NADPH--hemoprotein reductase] + H2O + H(+). The enzyme catalyses 17alpha-hydroxyprogesterone + reduced [NADPH--hemoprotein reductase] + O2 = 11-deoxycortisol + oxidized [NADPH--hemoprotein reductase] + H2O + H(+). Its function is as follows. A cytochrome P450 monooxygenase that plays a major role in adrenal steroidogenesis. Catalyzes the hydroxylation at C-21 of progesterone and 17alpha-hydroxyprogesterone to respectively form 11-deoxycorticosterone and 11-deoxycortisol, intermediate metabolites in the biosynthetic pathway of mineralocorticoids and glucocorticoids. Mechanistically, uses molecular oxygen inserting one oxygen atom into a substrate, and reducing the second into a water molecule, with two electrons provided by NADPH via cytochrome P450 reductase (CPR; NADPH-ferrihemoprotein reductase). In Sus scrofa (Pig), this protein is Steroid 21-hydroxylase (CYP21).